The primary structure comprises 344 residues: Arginine N-succinyltransferase (344 aa).

Leucine 125 serves as a coordination point for succinyl-CoA. The active-site Proton donor is histidine 229.

This sequence belongs to the arginine N-succinyltransferase family.

The catalysed reaction is succinyl-CoA + L-arginine = N(2)-succinyl-L-arginine + CoA + H(+). Its pathway is amino-acid degradation; L-arginine degradation via AST pathway; L-glutamate and succinate from L-arginine: step 1/5. Functionally, catalyzes the transfer of succinyl-CoA to arginine to produce N(2)-succinylarginine. The protein is Arginine N-succinyltransferase of Escherichia fergusonii (strain ATCC 35469 / DSM 13698 / CCUG 18766 / IAM 14443 / JCM 21226 / LMG 7866 / NBRC 102419 / NCTC 12128 / CDC 0568-73).